The following is an 89-amino-acid chain: UPF0367 protein PCC8801_1959 (89 aa).

Belongs to the UPF0367 family.

The chain is UPF0367 protein PCC8801_1959 from Rippkaea orientalis (strain PCC 8801 / RF-1) (Cyanothece sp. (strain PCC 8801)).